The primary structure comprises 413 residues: Gamma-glutamyl phosphate reductase (413 aa).

The protein belongs to the gamma-glutamyl phosphate reductase family.

Its subcellular location is the cytoplasm. The catalysed reaction is L-glutamate 5-semialdehyde + phosphate + NADP(+) = L-glutamyl 5-phosphate + NADPH + H(+). It participates in amino-acid biosynthesis; L-proline biosynthesis; L-glutamate 5-semialdehyde from L-glutamate: step 2/2. Functionally, catalyzes the NADPH-dependent reduction of L-glutamate 5-phosphate into L-glutamate 5-semialdehyde and phosphate. The product spontaneously undergoes cyclization to form 1-pyrroline-5-carboxylate. The protein is Gamma-glutamyl phosphate reductase of Leuconostoc mesenteroides subsp. mesenteroides (strain ATCC 8293 / DSM 20343 / BCRC 11652 / CCM 1803 / JCM 6124 / NCDO 523 / NBRC 100496 / NCIMB 8023 / NCTC 12954 / NRRL B-1118 / 37Y).